We begin with the raw amino-acid sequence, 347 residues long: Holliday junction branch migration complex subunit RuvB (347 aa).

Positions 1–183 (MSDERVVTPR…FGSVHRLEFY (183 aa)) are large ATPase domain (RuvB-L). ATP is bound by residues Leu-22, Arg-23, Gly-64, Lys-67, Thr-68, Ser-69, 130–132 (EDF), Arg-173, Tyr-183, and Arg-220. Thr-68 is a binding site for Mg(2+). The interval 184-254 (SVDALYEIVM…VARDALAKLE (71 aa)) is small ATPAse domain (RuvB-S). The head domain (RuvB-H) stretch occupies residues 257-347 (HLGLDENDRR…NGAEQGRLWT (91 aa)). Residues Arg-312 and Arg-317 each coordinate DNA.

Belongs to the RuvB family. Homohexamer. Forms an RuvA(8)-RuvB(12)-Holliday junction (HJ) complex. HJ DNA is sandwiched between 2 RuvA tetramers; dsDNA enters through RuvA and exits via RuvB. An RuvB hexamer assembles on each DNA strand where it exits the tetramer. Each RuvB hexamer is contacted by two RuvA subunits (via domain III) on 2 adjacent RuvB subunits; this complex drives branch migration. In the full resolvosome a probable DNA-RuvA(4)-RuvB(12)-RuvC(2) complex forms which resolves the HJ.

Its subcellular location is the cytoplasm. It carries out the reaction ATP + H2O = ADP + phosphate + H(+). In terms of biological role, the RuvA-RuvB-RuvC complex processes Holliday junction (HJ) DNA during genetic recombination and DNA repair, while the RuvA-RuvB complex plays an important role in the rescue of blocked DNA replication forks via replication fork reversal (RFR). RuvA specifically binds to HJ cruciform DNA, conferring on it an open structure. The RuvB hexamer acts as an ATP-dependent pump, pulling dsDNA into and through the RuvAB complex. RuvB forms 2 homohexamers on either side of HJ DNA bound by 1 or 2 RuvA tetramers; 4 subunits per hexamer contact DNA at a time. Coordinated motions by a converter formed by DNA-disengaged RuvB subunits stimulates ATP hydrolysis and nucleotide exchange. Immobilization of the converter enables RuvB to convert the ATP-contained energy into a lever motion, pulling 2 nucleotides of DNA out of the RuvA tetramer per ATP hydrolyzed, thus driving DNA branch migration. The RuvB motors rotate together with the DNA substrate, which together with the progressing nucleotide cycle form the mechanistic basis for DNA recombination by continuous HJ branch migration. Branch migration allows RuvC to scan DNA until it finds its consensus sequence, where it cleaves and resolves cruciform DNA. The sequence is that of Holliday junction branch migration complex subunit RuvB from Roseiflexus castenholzii (strain DSM 13941 / HLO8).